Reading from the N-terminus, the 129-residue chain is Flagellar assembly factor FliW 2 (129 aa).

The protein belongs to the FliW family. As to quaternary structure, interacts with translational regulator CsrA and flagellin(s).

The protein localises to the cytoplasm. Acts as an anti-CsrA protein, binds CsrA and prevents it from repressing translation of its target genes, one of which is flagellin. Binds to flagellin and participates in the assembly of the flagellum. This is Flagellar assembly factor FliW 2 from Helicobacter pylori (strain HPAG1).